We begin with the raw amino-acid sequence, 376 residues long: D-alanine--D-alanine ligase B (376 aa).

One can recognise an ATP-grasp domain in the interval 155–361 (KRLMRDAGLP…QTDLMDKLIA (207 aa)). Residue 184-239 (AALGTPDLFVKPANLGSSVGVSRARSEEEFAASCALAFRYDRKILVEQALNGAREI) coordinates ATP. Mg(2+) contacts are provided by D316, E328, and N330.

Belongs to the D-alanine--D-alanine ligase family. Mg(2+) is required as a cofactor. Mn(2+) serves as cofactor.

The protein localises to the cytoplasm. It carries out the reaction 2 D-alanine + ATP = D-alanyl-D-alanine + ADP + phosphate + H(+). Its pathway is cell wall biogenesis; peptidoglycan biosynthesis. Its function is as follows. Cell wall formation. The polypeptide is D-alanine--D-alanine ligase B (Bradyrhizobium diazoefficiens (strain JCM 10833 / BCRC 13528 / IAM 13628 / NBRC 14792 / USDA 110)).